A 29-amino-acid polypeptide reads, in one-letter code: Cytochrome b6-f complex subunit 8 (29 aa).

Residues 3-23 (IVNIAWAALMVVSTFSLTLVV) form a helical membrane-spanning segment.

The protein belongs to the PetN family. The 4 large subunits of the cytochrome b6-f complex are cytochrome b6, subunit IV (17 kDa polypeptide, PetD), cytochrome f and the Rieske protein, while the 4 small subunits are PetG, PetL, PetM and PetN. The complex functions as a dimer.

The protein resides in the plastid. It is found in the chloroplast thylakoid membrane. Its function is as follows. Component of the cytochrome b6-f complex, which mediates electron transfer between photosystem II (PSII) and photosystem I (PSI), cyclic electron flow around PSI, and state transitions. This chain is Cytochrome b6-f complex subunit 8, found in Huperzia lucidula (Shining clubmoss).